Consider the following 721-residue polypeptide: Rho GTPase-activating protein gacY (721 aa).

The segment at 1–325 (MDSSFKRASF…PQQPQQQQST (325 aa)) is disordered. Residues 17 to 33 (NIDNINEMNNNNMNTAP) are compositionally biased toward low complexity. Over residues 34–44 (APAPAPIPTPQ) the composition is skewed to pro residues. Positions 146 to 168 (DNNNNGNNNNNNNNNDNNNNNNN) are enriched in low complexity. Acidic residues predominate over residues 169-181 (NDDDDEDEDDDEY). Polar residues-rich tracts occupy residues 182 to 202 (SNVS…NTMN) and 219 to 240 (KNDS…SSRR). A compositionally biased stretch (low complexity) spans 308 to 323 (QQQQQPQQPQQPQQQQ). Positions 363–520 (KSQRFPEIEA…AIMMHRPAGK (158 aa)) constitute a CRAL-TRIO domain. Residues 528–719 (APLEDVINRP…LILDNINILF (192 aa)) form the Rho-GAP domain.

The protein localises to the cytoplasm. Functionally, rho GTPase-activating protein involved in the signal transduction pathway. This chain is Rho GTPase-activating protein gacY (gacY), found in Dictyostelium discoideum (Social amoeba).